The following is an 897-amino-acid chain: Interference hedgehog (897 aa).

Positions 1–26 are cleaved as a signal peptide; sequence MSVTRGHKSTPSLLLLFLSVLTSLLA. Residues 27–702 are Extracellular-facing; sequence AIPVLQANAP…THNETFNMNP (676 aa). Ig-like C2-type domains follow at residues 40–147, 148–235, 244–336, and 342–429; these read PGVR…ATIS, GDKI…RRLE, PSAA…YIQL, and PRIV…LQVN. Cystine bridges form between Cys63-Cys125, Cys169-Cys217, and Cys272-Cys320. Residues Asn96 and Asn99 are each glycosylated (N-linked (GlcNAc...) asparagine). Asn296, Asn351, Asn393, and Asn467 each carry an N-linked (GlcNAc...) asparagine glycan. Cys363 and Cys411 are disulfide-bonded. Positions 434–468 are disordered; the sequence is QAGDGMGTGGMGRSSNRNAHNRKQKQMVPPSAPNV. 2 consecutive Fibronectin type-III domains span residues 462–571 and 579–674; these read PPSA…LQRG and VPEL…TQRP. 3 residues coordinate heparin: Arg498, Lys504, and Lys506. Asn530 is a glycosylation site (N-linked (GlcNAc...) asparagine). Arg545 lines the heparin pocket. Residue Asn561 is glycosylated (N-linked (GlcNAc...) asparagine). Polar residues predominate over residues 666–682; it reads LKQGRTQRPRSSTTAQP. A disordered region spans residues 666–694; the sequence is LKQGRTQRPRSSTTAQPTMHTVDTTTPTH. The span at 683 to 694 shows a compositional bias: low complexity; sequence TMHTVDTTTPTH. Residue Asn695 is glycosylated (N-linked (GlcNAc...) asparagine). The helical transmembrane segment at 703–723 threads the bilayer; that stretch reads LLTGTISGGALLILLVISACL. The Cytoplasmic portion of the chain corresponds to 724-897; it reads CLCKRRHSRG…SSGSLNSVGV (174 aa). Disordered stretches follow at residues 773-793 and 819-849; these read AQQQQQQLQQQHQQDEKDSQD and MSSSSLRRSQRTLERAAAGGGSGGNNNNLNQ. Residues 774-784 show a composition bias toward low complexity; the sequence is QQQQQQLQQQH.

This sequence belongs to the immunoglobulin superfamily. IHOG family. In terms of assembly, homodimer. Heterotetramer; 2 iHog chains bind 2 hh chains when facilitated by heparin, heparin is required to promote high-affinity interactions between hh and iHog.

It is found in the membrane. Functionally, mediates response to the active Hedgehog (Hh) protein signal in embryos, functioning upstream or at the level of patched (ptc). The sequence is that of Interference hedgehog from Drosophila mojavensis (Fruit fly).